Consider the following 146-residue polypeptide: Large ribosomal subunit protein uL15 (146 aa).

A disordered region spans residues 1–51 (MKLHELQPAPGSRKERNRVGRGIGSGNGKTSGKGHKGQNARSGGGVRIGFE). Composition is skewed to gly residues over residues 21–31 (RGIGSGNGKTS) and 42–51 (SGGGVRIGFE).

This sequence belongs to the universal ribosomal protein uL15 family. In terms of assembly, part of the 50S ribosomal subunit.

Binds to the 23S rRNA. The protein is Large ribosomal subunit protein uL15 of Anoxybacillus flavithermus (strain DSM 21510 / WK1).